The following is a 301-amino-acid chain: N-acetylmuramic acid 6-phosphate etherase (301 aa).

In terms of domain architecture, SIS spans 59 to 222; the sequence is TSEALMHGGR…STSVMVKLGK (164 aa). Glu87 functions as the Proton donor in the catalytic mechanism. The active site involves Glu118.

Belongs to the GCKR-like family. MurNAc-6-P etherase subfamily. As to quaternary structure, homodimer.

The catalysed reaction is N-acetyl-D-muramate 6-phosphate + H2O = N-acetyl-D-glucosamine 6-phosphate + (R)-lactate. It participates in amino-sugar metabolism; N-acetylmuramate degradation. Functionally, specifically catalyzes the cleavage of the D-lactyl ether substituent of MurNAc 6-phosphate, producing GlcNAc 6-phosphate and D-lactate. The sequence is that of N-acetylmuramic acid 6-phosphate etherase from Picosynechococcus sp. (strain ATCC 27264 / PCC 7002 / PR-6) (Agmenellum quadruplicatum).